The following is a 367-amino-acid chain: Histidinol-phosphate aminotransferase (367 aa).

Lys-230 bears the N6-(pyridoxal phosphate)lysine mark.

It belongs to the class-II pyridoxal-phosphate-dependent aminotransferase family. Histidinol-phosphate aminotransferase subfamily. Homodimer. Requires pyridoxal 5'-phosphate as cofactor.

It carries out the reaction L-histidinol phosphate + 2-oxoglutarate = 3-(imidazol-4-yl)-2-oxopropyl phosphate + L-glutamate. The protein operates within amino-acid biosynthesis; L-histidine biosynthesis; L-histidine from 5-phospho-alpha-D-ribose 1-diphosphate: step 7/9. The polypeptide is Histidinol-phosphate aminotransferase (Thermobifida fusca (strain YX)).